The following is a 301-amino-acid chain: MNIVINVDTPTFEQMKSTYQAPGTLPAGAAFHAKLKGVTVTGYTKSHKVMFQGALANQEAARWQPNDAPAPSRSTPAPAGLPAGFATWSVLGSDEVGVGSYFGPLTTAAVFVAADQVASLTQLGVADSKKLTDPEIIRLAKQIMATCPVTYLNLMPAAYNARMKKYNQAQLKALCHNYVLAKTLERLATKPQAILIDQFVSERTYFNYLQGQPQIVSHHVYFQTKGEQAHVAVAAASIVARYQSLKAMDTLSEQAGITLPIGAGHAVDLIAAKLIRKGLDLNQFAKVHFANTQKARQLARQ.

Positions Trp88–Gln301 constitute an RNase H type-2 domain. A divalent metal cation-binding residues include Asp94, Glu95, and Asp197.

This sequence belongs to the RNase HII family. RnhC subfamily. Requires Mn(2+) as cofactor. The cofactor is Mg(2+).

It localises to the cytoplasm. The enzyme catalyses Endonucleolytic cleavage to 5'-phosphomonoester.. In terms of biological role, endonuclease that specifically degrades the RNA of RNA-DNA hybrids. The protein is Ribonuclease HIII of Limosilactobacillus fermentum (strain NBRC 3956 / LMG 18251) (Lactobacillus fermentum).